The chain runs to 90 residues: Acylphosphatase (90 aa).

The 88-residue stretch at 3-90 (AVHMNASGQV…FEGQDFIVKY (88 aa)) folds into the Acylphosphatase-like domain. Catalysis depends on residues arginine 18 and asparagine 36.

This sequence belongs to the acylphosphatase family.

It carries out the reaction an acyl phosphate + H2O = a carboxylate + phosphate + H(+). The protein is Acylphosphatase (acyP) of Pediococcus pentosaceus (strain ATCC 25745 / CCUG 21536 / LMG 10740 / 183-1w).